The primary structure comprises 377 residues: Dihydroorotate dehydrogenase (quinone) (377 aa).

FMN contacts are provided by residues 68 to 72 and threonine 92; that span reads AGFDK. Lysine 72 contributes to the substrate binding site. 117–121 serves as a coordination point for substrate; sequence NRMGF. 2 residues coordinate FMN: asparagine 149 and asparagine 182. Asparagine 182 contributes to the substrate binding site. The active-site Nucleophile is serine 185. Asparagine 187 contacts substrate. Lysine 224 and threonine 252 together coordinate FMN. 253–254 is a binding site for substrate; it reads NT. FMN-binding positions include glycine 278, glycine 307, and 328–329; that span reads YT.

It belongs to the dihydroorotate dehydrogenase family. Type 2 subfamily. In terms of assembly, monomer. FMN is required as a cofactor.

The protein localises to the cell membrane. The enzyme catalyses (S)-dihydroorotate + a quinone = orotate + a quinol. Its pathway is pyrimidine metabolism; UMP biosynthesis via de novo pathway; orotate from (S)-dihydroorotate (quinone route): step 1/1. Catalyzes the conversion of dihydroorotate to orotate with quinone as electron acceptor. This chain is Dihydroorotate dehydrogenase (quinone), found in Thermobifida fusca (strain YX).